Here is a 293-residue protein sequence, read N- to C-terminus: Forkhead box protein N5 (293 aa).

Residues 104 to 152 (TSPPLQLQRQLSNDYSTVEDSEDEAPTSCSDVLTDDDDSYNPWQPKHKR) are disordered. Over residues 106–119 (PPLQLQRQLSNDYS) the composition is skewed to polar residues. A DNA-binding region (fork-head) is located at residues 176 to 273 (RPPLNYCNLI…NEMHALSDDL (98 aa)).

It localises to the nucleus. This chain is Forkhead box protein N5, found in Xenopus tropicalis (Western clawed frog).